A 739-amino-acid chain; its full sequence is Phosphoribosylformylglycinamidine synthase subunit PurL (739 aa).

His-54 is an active-site residue. ATP is bound by residues Tyr-57 and Lys-96. A Mg(2+)-binding site is contributed by Glu-98. Residues 99–102 and Arg-121 each bind substrate; that span reads SHNH. Residue His-100 is the Proton acceptor of the active site. Residue Asp-122 coordinates Mg(2+). Residue Gln-245 coordinates substrate. Residue Asp-273 coordinates Mg(2+). 317-319 contributes to the substrate binding site; sequence ESQ. Asp-500 and Gly-537 together coordinate ATP. Asn-538 lines the Mg(2+) pocket. Residue Ser-540 participates in substrate binding.

The protein belongs to the FGAMS family. Monomer. Part of the FGAM synthase complex composed of 1 PurL, 1 PurQ and 2 PurS subunits.

Its subcellular location is the cytoplasm. The enzyme catalyses N(2)-formyl-N(1)-(5-phospho-beta-D-ribosyl)glycinamide + L-glutamine + ATP + H2O = 2-formamido-N(1)-(5-O-phospho-beta-D-ribosyl)acetamidine + L-glutamate + ADP + phosphate + H(+). It participates in purine metabolism; IMP biosynthesis via de novo pathway; 5-amino-1-(5-phospho-D-ribosyl)imidazole from N(2)-formyl-N(1)-(5-phospho-D-ribosyl)glycinamide: step 1/2. In terms of biological role, part of the phosphoribosylformylglycinamidine synthase complex involved in the purines biosynthetic pathway. Catalyzes the ATP-dependent conversion of formylglycinamide ribonucleotide (FGAR) and glutamine to yield formylglycinamidine ribonucleotide (FGAM) and glutamate. The FGAM synthase complex is composed of three subunits. PurQ produces an ammonia molecule by converting glutamine to glutamate. PurL transfers the ammonia molecule to FGAR to form FGAM in an ATP-dependent manner. PurS interacts with PurQ and PurL and is thought to assist in the transfer of the ammonia molecule from PurQ to PurL. This is Phosphoribosylformylglycinamidine synthase subunit PurL from Exiguobacterium sp. (strain ATCC BAA-1283 / AT1b).